Here is a 101-residue protein sequence, read N- to C-terminus: Urease subunit beta (101 aa).

This sequence belongs to the urease beta subunit family. Heterotrimer of UreA (gamma), UreB (beta) and UreC (alpha) subunits. Three heterotrimers associate to form the active enzyme.

It localises to the cytoplasm. It carries out the reaction urea + 2 H2O + H(+) = hydrogencarbonate + 2 NH4(+). It participates in nitrogen metabolism; urea degradation; CO(2) and NH(3) from urea (urease route): step 1/1. This Mesorhizobium japonicum (strain LMG 29417 / CECT 9101 / MAFF 303099) (Mesorhizobium loti (strain MAFF 303099)) protein is Urease subunit beta.